A 271-amino-acid polypeptide reads, in one-letter code: Large ribosomal subunit protein eL8 (271 aa).

This sequence belongs to the eukaryotic ribosomal protein eL8 family.

This chain is Large ribosomal subunit protein eL8 (RpL7A), found in Drosophila melanogaster (Fruit fly).